We begin with the raw amino-acid sequence, 188 residues long: Peptidyl-tRNA hydrolase (188 aa).

Residue Tyr14 coordinates tRNA. The active-site Proton acceptor is His19. The tRNA site is built by Tyr64, Asn66, and Asn112.

It belongs to the PTH family. Monomer.

The protein resides in the cytoplasm. It catalyses the reaction an N-acyl-L-alpha-aminoacyl-tRNA + H2O = an N-acyl-L-amino acid + a tRNA + H(+). Its function is as follows. Hydrolyzes ribosome-free peptidyl-tRNAs (with 1 or more amino acids incorporated), which drop off the ribosome during protein synthesis, or as a result of ribosome stalling. Catalyzes the release of premature peptidyl moieties from peptidyl-tRNA molecules trapped in stalled 50S ribosomal subunits, and thus maintains levels of free tRNAs and 50S ribosomes. The polypeptide is Peptidyl-tRNA hydrolase (Bacillus pumilus (strain SAFR-032)).